A 106-amino-acid polypeptide reads, in one-letter code: Putative toxin Rv3098A/RVBD_3098A (106 aa).

This sequence belongs to the PemK/MazF family. In terms of assembly, forms a complex with cognate antitoxin Rv3098B/RVBD_3098B.

Functionally, putative toxic component of a possible type II toxin-antitoxin (TA) system. Its toxic effect may be neutralized by cognate antitoxin Rv3098B/RVBD_3098B. The sequence is that of Putative toxin Rv3098A/RVBD_3098A from Mycobacterium tuberculosis (strain ATCC 25618 / H37Rv).